Consider the following 200-residue polypeptide: Rho GDP-dissociation inhibitor 2 (200 aa).

A disordered region spans residues 1–39; it reads MTEKDAQPQLEEADDDLDSKLNYKPPPQKSLKELQEMDK. Residue Thr-2 is modified to N-acetylthreonine. Lys-20 is modified (N6-acetyllysine). Tyr-23 carries the phosphotyrosine modification. Lys-24, Lys-39, Lys-46, Lys-101, and Lys-123 each carry N6-acetyllysine. Basic and acidic residues predominate over residues 30-39; the sequence is SLKELQEMDK. A Phosphoserine modification is found at Ser-144. Lys-174 is subject to N6-acetyllysine.

This sequence belongs to the Rho GDI family. Interacts with RHOA. Interacts with RAC1. Interacts with RAC2. Interacts with CDC42. In terms of tissue distribution, preferentially expressed in hematopoietic cells.

It localises to the cytoplasm. It is found in the cytosol. In terms of biological role, regulates the GDP/GTP exchange reaction of the Rho proteins by inhibiting the dissociation of GDP from them, and the subsequent binding of GTP to them. Regulates reorganization of the actin cytoskeleton mediated by Rho family members. This Mus musculus (Mouse) protein is Rho GDP-dissociation inhibitor 2 (Arhgdib).